A 422-amino-acid chain; its full sequence is 5-hydroxytryptamine receptor 1A (422 aa).

The Extracellular segment spans residues 1–38; it reads MDVLGPGQGNNTTSSEGPFGTRANATGISDVTFSYQVI. N-linked (GlcNAc...) asparagine glycans are attached at residues N10, N11, and N24. A helical membrane pass occupies residues 39–59; the sequence is TSLLLGTLIFCAVLGNACVVA. Over 60–73 the chain is Cytoplasmic; that stretch reads AIALERSLQNVANY. The chain crosses the membrane as a helical span at residues 74-98; it reads LIGSLAVTDLMVSVLVLPMAALYQV. Residues 99-107 lie on the Extracellular side of the membrane; that stretch reads LNKWTLGQV. The chain crosses the membrane as a helical span at residues 108 to 132; the sequence is TCDLFIALDVLCCTSSILHLCAIAL. Residues C109 and C187 are joined by a disulfide bond. Residues D116 and C120 each contribute to the serotonin site. The DRY motif; important for ligand-induced conformation changes signature appears at 133–135; sequence DRY. Over 133–152 the chain is Cytoplasmic; it reads DRYWAITDPIDYVNKRTPRR. The helical transmembrane segment at 153–174 threads the bilayer; that stretch reads AAALISLTWLVGFLISIPPMLG. Residues 175 to 193 lie on the Extracellular side of the membrane; sequence WRTPEDRSDPDACTISKDH. The helical transmembrane segment at 194–216 threads the bilayer; that stretch reads GYTIYSTFGAFYIPLLLMLVLYG. Residues 217-346 lie on the Cytoplasmic side of the membrane; it reads RIFRAARFRI…LARERKTVKT (130 aa). Residues 237-262 are disordered; that stretch reads GADSRLGASPAPQRKKSANGELGSRE. 1D-myo-inositol 4-phosphate is bound by residues K345, T346, and G352. A helical membrane pass occupies residues 347-370; it reads LGIIMGTFILCWLPFFIVALVLPF. Topologically, residues 371–378 are extracellular; sequence CESSCHMP. A helical transmembrane segment spans residues 379–403; the sequence is TLLGAIINWLGYSNSLLNPVIYAYF. The NPxxY motif; important for ligand-induced conformation changes and signaling signature appears at 396–400; sequence NPVIY. 1D-myo-inositol 4-phosphate is bound by residues F403, N404, and K405. Topologically, residues 404–422 are cytoplasmic; it reads NKDFQNAFKKILKCKFCRR.

The protein belongs to the G-protein coupled receptor 1 family. 5-hydroxytryptamine receptor subfamily. HTR1A sub-subfamily. As to quaternary structure, heterodimer; heterodimerizes with GPER1. Interacts with YIF1B. Interacts with GPR39 and GALR1.

The protein resides in the cell membrane. It is found in the cell projection. It localises to the dendrite. With respect to regulation, G-protein coupled receptor activity is regulated by lipids: phosphatidylinositol 4-phosphate increases HTR1A-mediated activity. In terms of biological role, G-protein coupled receptor for 5-hydroxytryptamine (serotonin). Also functions as a receptor for various drugs and psychoactive substances. Ligand binding causes a conformation change that triggers signaling via guanine nucleotide-binding proteins (G proteins) and modulates the activity of downstream effectors, such as adenylate cyclase. HTR1A is coupled to G(i)/G(o) G alpha proteins and mediates inhibitory neurotransmission: signaling inhibits adenylate cyclase activity and activates a phosphatidylinositol-calcium second messenger system that regulates the release of Ca(2+) ions from intracellular stores. Beta-arrestin family members regulate signaling by mediating both receptor desensitization and resensitization processes. In Equus caballus (Horse), this protein is 5-hydroxytryptamine receptor 1A (HTR1A).